The primary structure comprises 250 residues: Adenosylcobinamide-GDP ribazoletransferase (250 aa).

6 helical membrane-spanning segments follow: residues Ile-33–Ile-53, Ile-63–Gly-83, Leu-109–Thr-129, Leu-137–Ile-157, Phe-180–Phe-200, and Ile-203–Gly-223.

The protein belongs to the CobS family. It depends on Mg(2+) as a cofactor.

The protein resides in the cell membrane. The catalysed reaction is alpha-ribazole + adenosylcob(III)inamide-GDP = adenosylcob(III)alamin + GMP + H(+). The enzyme catalyses alpha-ribazole 5'-phosphate + adenosylcob(III)inamide-GDP = adenosylcob(III)alamin 5'-phosphate + GMP + H(+). It functions in the pathway cofactor biosynthesis; adenosylcobalamin biosynthesis; adenosylcobalamin from cob(II)yrinate a,c-diamide: step 7/7. Functionally, joins adenosylcobinamide-GDP and alpha-ribazole to generate adenosylcobalamin (Ado-cobalamin). Also synthesizes adenosylcobalamin 5'-phosphate from adenosylcobinamide-GDP and alpha-ribazole 5'-phosphate. This chain is Adenosylcobinamide-GDP ribazoletransferase, found in Thermoanaerobacter pseudethanolicus (strain ATCC 33223 / 39E) (Clostridium thermohydrosulfuricum).